Consider the following 204-residue polypeptide: Recombination protein RecR (204 aa).

A C4-type zinc finger spans residues 58–75 (CSICQNITDLGTDPCLLC). One can recognise a Toprim domain in the interval 83 to 181 (SVICVVESPT…NVTRIARGIP (99 aa)).

This sequence belongs to the RecR family.

In terms of biological role, may play a role in DNA repair. It seems to be involved in an RecBC-independent recombinational process of DNA repair. It may act with RecF and RecO. This Chlorobaculum parvum (strain DSM 263 / NCIMB 8327) (Chlorobium vibrioforme subsp. thiosulfatophilum) protein is Recombination protein RecR.